Reading from the N-terminus, the 375-residue chain is MGKDFKSMVTRCIYVGKENDNVKKLKTATEELKDLRNIVMKRVKMYEDQQKLKRLEKVQVWLRQADVAIKEAEEMLITLMSSSSSNGSSMMSFHKLDKKLCKKLKEVQEIKSRGTFDVVVENSGIGSGSMMISNVDRDDQTVGLEAVSGLVWRCMTVDNTGIIGLYGVEGVGKTTVLTQVNNRLLQHKLNGFDFVIWVFVSKNVNLEKIQDTIREKIGFLDRSWMSKTEEEKAGKIFEILSKRRFALFLDDVWEKVDLVKAGVPPPDGLNRSKIVFTTCSDEVCQEMGAQTKIKMEKLPWERAWDLFKMNAGEEIVKSHPDITKVAQEVAAKCDGLPLALVTIGRAMASKKTPQEWRDALYILSTSPPNFSGPIL.

A coiled-coil region spans residues 17 to 49; that stretch reads KENDNVKKLKTATEELKDLRNIVMKRVKMYEDQ. The region spanning 158 to 372 is the NB-ARC domain; sequence DNTGIIGLYG…LSTSPPNFSG (215 aa). Residue 167–174 participates in ATP binding; that stretch reads GVEGVGKT.

Potential disease resistance protein. In Arabidopsis thaliana (Mouse-ear cress), this protein is Putative disease resistance protein At3g15700.